The sequence spans 292 residues: RNA 5'-monophosphate methyltransferase (292 aa).

The disordered stretch occupies residues 1 to 22 (MAASTEQATGGVEKTAAEEKPR). Residues Arg46, Asn76, Asp110, 135 to 136 (DF), and Met164 contribute to the S-adenosyl-L-methionine site. In terms of domain architecture, Bin3-type SAM spans 53 to 274 (ELLRRLFPQS…KQATETHPIP (222 aa)).

Belongs to the methyltransferase superfamily. As to quaternary structure, interacts with DICER1; the interaction may be mediated by RNA.

It is found in the cytoplasm. It catalyses the reaction a 5'-end 5'-phospho-ribonucleoside-RNA + S-adenosyl-L-methionine = a 5'-end (5'-methylphospho)-ribonucleoside-RNA + S-adenosyl-L-homocysteine. It carries out the reaction a 5'-end 5'-phospho-ribonucleoside-RNA + 2 S-adenosyl-L-methionine = a 5'-end (5'-bismethylphospho)-ribonucleoside-RNA + 2 S-adenosyl-L-homocysteine. Functionally, O-methyltransferase that specifically monomethylates 5'-monophosphate of cytoplasmic histidyl tRNA (tRNA(His)), acting as a capping enzyme by protecting tRNA(His) from cleavage by DICER1. Also able, with less efficiently, to methylate the 5' monophosphate of a subset of pre-miRNAs, acting as a negative regulator of miRNA processing. The 5' monophosphate of pre-miRNAs is recognized by DICER1 and is required for pre-miRNAs processing: methylation at this position reduces the processing of pre-miRNAs by DICER1. Was also reported to mediate dimethylation of pre-miR-145; however dimethylation cannot be reproduced by another group which observes a monomethylation of pre-miR-145. The protein is RNA 5'-monophosphate methyltransferase (BCDIN3D) of Bos taurus (Bovine).